The following is a 196-amino-acid chain: ATP-dependent Clp protease proteolytic subunit (196 aa).

The active-site Nucleophile is serine 101. Histidine 126 is a catalytic residue.

The protein belongs to the peptidase S14 family. Component of the chloroplastic Clp protease core complex.

The protein resides in the plastid. Its subcellular location is the chloroplast stroma. It catalyses the reaction Hydrolysis of proteins to small peptides in the presence of ATP and magnesium. alpha-casein is the usual test substrate. In the absence of ATP, only oligopeptides shorter than five residues are hydrolyzed (such as succinyl-Leu-Tyr-|-NHMec, and Leu-Tyr-Leu-|-Tyr-Trp, in which cleavage of the -Tyr-|-Leu- and -Tyr-|-Trp bonds also occurs).. Functionally, cleaves peptides in various proteins in a process that requires ATP hydrolysis. Has a chymotrypsin-like activity. Plays a major role in the degradation of misfolded proteins. This Lotus japonicus (Lotus corniculatus var. japonicus) protein is ATP-dependent Clp protease proteolytic subunit.